The primary structure comprises 164 residues: UPF0114 protein YqhA (164 aa).

The next 3 helical transmembrane spans lie at 15–35 (LLAP…LKFF), 53–73 (LILV…LVMV), and 136–156 (LMWY…MGYL).

Belongs to the UPF0114 family.

It is found in the cell membrane. In Escherichia coli O6:H1 (strain CFT073 / ATCC 700928 / UPEC), this protein is UPF0114 protein YqhA.